Consider the following 843-residue polypeptide: Translation initiation factor IF-2 (843 aa).

The segment at 94 to 259 is disordered; it reads QRSPEEIEAE…AHGFQSPTGP (166 aa). The segment covering 96 to 135 has biased composition (basic and acidic residues); it reads SPEEIEAERKREMDERRAVENAARQKAEEEAKRRAEEDAR. Residues 136 to 177 are compositionally biased toward low complexity; the sequence is NQPAAGQPASAPAQPVAAAEPVREAPAPAAAAPAPASAAPSA. Composition is skewed to basic and acidic residues over residues 178–219 and 227–236; these read DARK…EKAP and TTDEESDSFR. A compositionally biased stretch (basic residues) spans 237-250; sequence RGGRGKSRLKKRNA. Residues 343-512 enclose the tr-type G domain; sequence SRAPVVTVMG…LLQAEVLELK (170 aa). Positions 352 to 359 are G1; that stretch reads GHVDHGKT. 352–359 contributes to the GTP binding site; that stretch reads GHVDHGKT. The segment at 377-381 is G2; the sequence is GITQH. A G3 region spans residues 398-401; it reads DTPG. Residues 398–402 and 452–455 contribute to the GTP site; these read DTPGH and NKID. A G4 region spans residues 452-455; sequence NKID. The interval 488–490 is G5; the sequence is SAK.

The protein belongs to the TRAFAC class translation factor GTPase superfamily. Classic translation factor GTPase family. IF-2 subfamily.

The protein localises to the cytoplasm. Functionally, one of the essential components for the initiation of protein synthesis. Protects formylmethionyl-tRNA from spontaneous hydrolysis and promotes its binding to the 30S ribosomal subunits. Also involved in the hydrolysis of GTP during the formation of the 70S ribosomal complex. In Pseudomonas savastanoi pv. phaseolicola (strain 1448A / Race 6) (Pseudomonas syringae pv. phaseolicola (strain 1448A / Race 6)), this protein is Translation initiation factor IF-2.